The primary structure comprises 150 residues: D-aminoacyl-tRNA deacylase (150 aa).

A Gly-cisPro motif, important for rejection of L-amino acids motif is present at residues 136–137 (GP).

The protein belongs to the DTD family. In terms of assembly, homodimer.

The protein resides in the cytoplasm. The catalysed reaction is glycyl-tRNA(Ala) + H2O = tRNA(Ala) + glycine + H(+). The enzyme catalyses a D-aminoacyl-tRNA + H2O = a tRNA + a D-alpha-amino acid + H(+). An aminoacyl-tRNA editing enzyme that deacylates mischarged D-aminoacyl-tRNAs. Also deacylates mischarged glycyl-tRNA(Ala), protecting cells against glycine mischarging by AlaRS. Acts via tRNA-based rather than protein-based catalysis; rejects L-amino acids rather than detecting D-amino acids in the active site. By recycling D-aminoacyl-tRNA to D-amino acids and free tRNA molecules, this enzyme counteracts the toxicity associated with the formation of D-aminoacyl-tRNA entities in vivo and helps enforce protein L-homochirality. This is D-aminoacyl-tRNA deacylase from Staphylococcus aureus (strain bovine RF122 / ET3-1).